A 236-amino-acid polypeptide reads, in one-letter code: Small ribosomal subunit protein uS2c (236 aa).

Belongs to the universal ribosomal protein uS2 family.

It is found in the plastid. Its subcellular location is the chloroplast. This is Small ribosomal subunit protein uS2c (rps2) from Oryza sativa (Rice).